A 229-amino-acid polypeptide reads, in one-letter code: Probable U3 small nucleolar RNA-associated protein 11 (229 aa).

Disordered stretches follow at residues 1 to 23 (MSSL…ESRK) and 199 to 229 (KKPG…QRKR).

It belongs to the UTP11 family. Component of the ribosomal small subunit (SSU) processome.

The protein resides in the nucleus. It is found in the nucleolus. Its function is as follows. Involved in nucleolar processing of pre-18S ribosomal RNA. This chain is Probable U3 small nucleolar RNA-associated protein 11, found in Oryza sativa subsp. japonica (Rice).